The following is a 152-amino-acid chain: MSSLAFNYIVNLLSHREYSEFELRNKMQEKNFSEEEIDEALSRCQAKNWQSDRRFSENYLNSRAQKGYGVGRIRQELRQLKGVSSDIIDEVLMESEIDWYEMAENLLRKKFPNYNEQQTPKMKQKIWQYMLSHGFRSDEFADLIGQNQSEWD.

Belongs to the RecX family.

The protein localises to the cytoplasm. Functionally, modulates RecA activity. The sequence is that of Regulatory protein RecX from Haemophilus influenzae (strain PittGG).